The chain runs to 214 residues: 2-phospho-L-lactate guanylyltransferase (214 aa).

This sequence belongs to the CofC family. As to quaternary structure, homodimer.

It carries out the reaction (2S)-2-phospholactate + GTP + H(+) = (2S)-lactyl-2-diphospho-5'-guanosine + diphosphate. It participates in cofactor biosynthesis; coenzyme F420 biosynthesis. Its function is as follows. Guanylyltransferase that catalyzes the activation of (2S)-2-phospholactate (2-PL) as (2S)-lactyl-2-diphospho-5'-guanosine, via the condensation of 2-PL with GTP. It is involved in the biosynthesis of coenzyme F420, a hydride carrier cofactor. This is 2-phospho-L-lactate guanylyltransferase from Methanoregula boonei (strain DSM 21154 / JCM 14090 / 6A8).